Here is a 618-residue protein sequence, read N- to C-terminus: Proline--tRNA ligase (618 aa).

Belongs to the class-II aminoacyl-tRNA synthetase family. ProS type 1 subfamily. Homodimer.

The protein resides in the cytoplasm. It catalyses the reaction tRNA(Pro) + L-proline + ATP = L-prolyl-tRNA(Pro) + AMP + diphosphate. Catalyzes the attachment of proline to tRNA(Pro) in a two-step reaction: proline is first activated by ATP to form Pro-AMP and then transferred to the acceptor end of tRNA(Pro). As ProRS can inadvertently accommodate and process non-cognate amino acids such as alanine and cysteine, to avoid such errors it has two additional distinct editing activities against alanine. One activity is designated as 'pretransfer' editing and involves the tRNA(Pro)-independent hydrolysis of activated Ala-AMP. The other activity is designated 'posttransfer' editing and involves deacylation of mischarged Ala-tRNA(Pro). The misacylated Cys-tRNA(Pro) is not edited by ProRS. The protein is Proline--tRNA ligase of Streptococcus pyogenes serotype M5 (strain Manfredo).